A 333-amino-acid polypeptide reads, in one-letter code: Large ribosomal subunit protein mL39 (333 aa).

The 67-residue stretch at 56–122 folds into the TGS domain; sequence DKIEVRYLGL…QESCTLQLLN (67 aa). The disordered stretch occupies residues 311–333; sequence SKKPSPARLPNEPFEEQQQLQLS.

Belongs to the mitochondrion-specific ribosomal protein mL39 family. As to quaternary structure, component of the mitochondrial ribosome large subunit (39S) which comprises a 16S rRNA and about 50 distinct proteins.

It is found in the mitochondrion. In Drosophila melanogaster (Fruit fly), this protein is Large ribosomal subunit protein mL39 (mRpL39).